The primary structure comprises 512 residues: MKRALVSVSDKQNLVPFVKGLVENGFEIISTGGTKRVLDEAGIETIGIEDVTHFPEILDGRVKTLNPYVHGGLLARRNLPEHMATLEKLNITPIDLVCVNLYPFKETIEKPGVEIADAIENIDIGGPSMVRSAAKNYHDVTIVVDQADYDEVLAQIKEDGETSLATRARLAAKAFRHTAAYDSLISQYLTKQTGLEDPEKLTLSWDLKETMRYGENSHQKAWLYEDALPKAFSVLQAKQLHGKKLSYNNIKDADEALRCIREFDEPTVVAMKHMNPCGIGRGDSLVQAWDRAYEADPVSIFGGVIALNRQVDLVTAEKMHKIFLEIVIAPGFDDDAFELLAKKKNIRLLTLDFSKKDEPTKHEVVSVMGGMLLQEQDMLKEDYHDWQCVTEKQPTEEQLKTLMFAWKAVKHAKSNAIVLANDERTLGVGEGQPNRIDSLKIAVKHAGEAIDDRTVMASDAFFPFGDCVEYAGQNGIKAIVQPGGSVRDQESIEMANKYGIAMVTTGIRHFRH.

Residues 1–144 (MKRALVSVSD…KNYHDVTIVV (144 aa)) enclose the MGS-like domain.

The protein belongs to the PurH family.

The enzyme catalyses (6R)-10-formyltetrahydrofolate + 5-amino-1-(5-phospho-beta-D-ribosyl)imidazole-4-carboxamide = 5-formamido-1-(5-phospho-D-ribosyl)imidazole-4-carboxamide + (6S)-5,6,7,8-tetrahydrofolate. It carries out the reaction IMP + H2O = 5-formamido-1-(5-phospho-D-ribosyl)imidazole-4-carboxamide. The protein operates within purine metabolism; IMP biosynthesis via de novo pathway; 5-formamido-1-(5-phospho-D-ribosyl)imidazole-4-carboxamide from 5-amino-1-(5-phospho-D-ribosyl)imidazole-4-carboxamide (10-formyl THF route): step 1/1. It functions in the pathway purine metabolism; IMP biosynthesis via de novo pathway; IMP from 5-formamido-1-(5-phospho-D-ribosyl)imidazole-4-carboxamide: step 1/1. The polypeptide is Bifunctional purine biosynthesis protein PurH (Limosilactobacillus reuteri (strain DSM 20016) (Lactobacillus reuteri)).